The sequence spans 348 residues: DnaJ homolog subfamily B member 5 (348 aa).

Residues 4–68 (DYYKILGIPS…KKRSLYDQYG (65 aa)) form the J domain.

This Mus musculus (Mouse) protein is DnaJ homolog subfamily B member 5 (Dnajb5).